A 470-amino-acid polypeptide reads, in one-letter code: Cell division protein FtsP (470 aa).

Residues 1–27 (MSLSRRQFIQASGIALCAGAVPLKASA) constitute a signal peptide (tat-type signal). One can recognise a Plastocyanin-like domain in the interval 68–164 (WGINGRYLGP…NGLAGMWLVE (97 aa)).

It belongs to the FtsP family. In terms of processing, exported by the Tat system. The position of the signal peptide cleavage has been experimentally proven. Can also be exported by the Sec system.

It is found in the periplasm. Functionally, cell division protein that is required for growth during stress conditions. May be involved in protecting or stabilizing the divisomal assembly under conditions of stress. In Escherichia coli (strain K12), this protein is Cell division protein FtsP.